The following is a 267-amino-acid chain: 3-methyl-2-oxobutanoate hydroxymethyltransferase (267 aa).

The Mg(2+) site is built by aspartate 46 and aspartate 85. Residues 46 to 47 (DS), aspartate 85, and lysine 115 contribute to the 3-methyl-2-oxobutanoate site. Residue glutamate 117 participates in Mg(2+) binding. Residue glutamate 184 is the Proton acceptor of the active site.

It belongs to the PanB family. In terms of assembly, homodecamer; pentamer of dimers. Requires Mg(2+) as cofactor.

The protein resides in the cytoplasm. The enzyme catalyses 3-methyl-2-oxobutanoate + (6R)-5,10-methylene-5,6,7,8-tetrahydrofolate + H2O = 2-dehydropantoate + (6S)-5,6,7,8-tetrahydrofolate. Its pathway is cofactor biosynthesis; (R)-pantothenate biosynthesis; (R)-pantoate from 3-methyl-2-oxobutanoate: step 1/2. Its function is as follows. Catalyzes the reversible reaction in which hydroxymethyl group from 5,10-methylenetetrahydrofolate is transferred onto alpha-ketoisovalerate to form ketopantoate. The protein is 3-methyl-2-oxobutanoate hydroxymethyltransferase of Citrifermentans bemidjiense (strain ATCC BAA-1014 / DSM 16622 / JCM 12645 / Bem) (Geobacter bemidjiensis).